Reading from the N-terminus, the 298-residue chain is Probable prolyl 4-hydroxylase 4 (298 aa).

The Cytoplasmic segment spans residues 1 to 6; the sequence is MARRGL. The helical; Signal-anchor for type II membrane protein transmembrane segment at 7–25 threads the bilayer; sequence LISFFAIFSVLLQSSTSLI. Residues 26 to 298 are Lumenal-facing; it reads SSSSVFVNPS…GYCRRSCKAC (273 aa). Asparagine 77 is a glycosylation site (N-linked (GlcNAc...) asparagine). Positions 120–245 constitute a Fe2OG dioxygenase domain; that stretch reads NGEDIQVLRY…KWSATKWIHV (126 aa). Positions 138 and 140 each coordinate Fe cation. Asparagine 164 carries an N-linked (GlcNAc...) asparagine glycan. Histidine 226 serves as a coordination point for Fe cation. 2-oxoglutarate is bound at residue lysine 236. Residues asparagine 257 and asparagine 262 are each glycosylated (N-linked (GlcNAc...) asparagine). The 41-residue stretch at 258–298 folds into the ShKT domain; the sequence is CTDMNESCERWAVLGECTKNPEYMVGTTELPGYCRRSCKAC. 3 disulfides stabilise this stretch: cysteine 258/cysteine 298, cysteine 265/cysteine 291, and cysteine 274/cysteine 295.

This sequence belongs to the P4HA family. Fe(2+) is required as a cofactor. L-ascorbate serves as cofactor.

It localises to the endoplasmic reticulum membrane. It carries out the reaction L-prolyl-[collagen] + 2-oxoglutarate + O2 = trans-4-hydroxy-L-prolyl-[collagen] + succinate + CO2. Its function is as follows. Catalyzes the post-translational formation of 4-hydroxyproline in -Xaa-Pro-Gly- sequences in proline-rich peptide sequences of plant glycoproteins and other proteins. Hydroxyprolines are important constituent of many plant cell wall glycoproteins such as extensins, hydroxyproline-rich glycoproteins, lectins and arabinogalactan proteins. This chain is Probable prolyl 4-hydroxylase 4, found in Arabidopsis thaliana (Mouse-ear cress).